Consider the following 477-residue polypeptide: Protein DETOXIFICATION 5 (477 aa).

The next 12 helical transmembrane spans lie at 38-58 (AAPMATVTVSQYLLPVISVMV), 72-92 (LATAFANVSGFGIMYGLVGAL), 113-133 (FSAIVSNVPIVVLISILWFYM), 146-166 (ISKVAGSYAVCLIPALLAQAV), 187-207 (AITTLLFHIPVCLILVYAFGL), 211-231 (GAALAIGLSYWFNVLILALYV), 263-283 (AAMTTIEWSLFELLILSSGLL), 292-312 (VLSICLTTSSLHCVIPMGIGA), 333-353 (AVFAGIFLWFLEATICSTLLF), 376-396 (LSSLLCLSFMVDGFSSVLDGV), 411-431 (VVAYYLLGAPVGFFLGFWGHM), and 436-456 (LWIGVIVGSTAQGIILAIVTA).

It belongs to the multi antimicrobial extrusion (MATE) (TC 2.A.66.1) family.

Its subcellular location is the membrane. In Arabidopsis thaliana (Mouse-ear cress), this protein is Protein DETOXIFICATION 5.